The primary structure comprises 182 residues: Testis development-related protein (182 aa).

Disordered regions lie at residues 1-38 (MWKL…GASL), 52-73 (DEEH…QRLR), and 95-151 (QPKK…NSAS). S7 is subject to Phosphoserine. The span at 22-37 (RGAPPASAAAPASGAS) shows a compositional bias: low complexity. Positions 59 to 70 (TSRSPKSKGTNQ) are enriched in polar residues. Residues 116-125 (VADHTEDDRS) are compositionally biased toward basic and acidic residues.

This sequence belongs to the TDRP family. In terms of assembly, interacts with PRM2. In terms of tissue distribution, strongly expressed in testis. Also detected at lower levels in epididymis, bone marrow and kidney.

Its subcellular location is the nucleus. It localises to the cytoplasm. Its function is as follows. Contributes to normal sperm motility, but not essential for male fertility. This Mus musculus (Mouse) protein is Testis development-related protein (Tdrp).